Consider the following 107-residue polypeptide: Iron-binding protein IscA (107 aa).

Positions 35, 99, and 101 each coordinate Fe cation.

This sequence belongs to the HesB/IscA family. As to quaternary structure, homodimer; may form tetramers and higher multimers. It depends on Fe cation as a cofactor.

Is able to transfer iron-sulfur clusters to apo-ferredoxin. Multiple cycles of [2Fe2S] cluster formation and transfer are observed, suggesting that IscA acts catalytically. Recruits intracellular free iron so as to provide iron for the assembly of transient iron-sulfur cluster in IscU in the presence of IscS, L-cysteine and the thioredoxin reductase system TrxA/TrxB. This chain is Iron-binding protein IscA, found in Yersinia pestis bv. Antiqua (strain Angola).